We begin with the raw amino-acid sequence, 296 residues long: Elongation factor Ts (296 aa).

The segment at threonine 82–valine 85 is involved in Mg(2+) ion dislocation from EF-Tu.

This sequence belongs to the EF-Ts family.

Its subcellular location is the cytoplasm. In terms of biological role, associates with the EF-Tu.GDP complex and induces the exchange of GDP to GTP. It remains bound to the aminoacyl-tRNA.EF-Tu.GTP complex up to the GTP hydrolysis stage on the ribosome. This chain is Elongation factor Ts, found in Coxiella burnetii (strain CbuK_Q154) (Coxiella burnetii (strain Q154)).